The primary structure comprises 660 residues: ATPase WRNIP1 (660 aa).

The segment at 17 to 44 (QVQCPVCQQMMPAAHINSHLDRCLLLHP) adopts a UBZ4-type zinc-finger fold. Zn(2+)-binding residues include Cys20, Cys23, His31, His35, and Cys39. Residues 48–191 (AEPAAGSHRA…DDPGHWDADA (144 aa)) form a disordered region. Ser65 and Ser75 each carry phosphoserine. The segment covering 76 to 89 (ESSALKQPATPTAA) has biased composition (polar residues). Residue Lys81 forms a Glycyl lysine isopeptide (Lys-Gly) (interchain with G-Cter in ubiquitin) linkage. At Thr85 the chain carries Phosphothreonine. Residues Ser91 and Ser92 each carry the phosphoserine modification. The span at 92 to 104 (SEGEGEEGDDGGE) shows a compositional bias: acidic residues. Thr116 carries the post-translational modification Phosphothreonine. A compositionally biased stretch (low complexity) spans 135-155 (ARKGMGKRPAAAAAAGSASPR). Lys141 participates in a covalent cross-link: Glycyl lysine isopeptide (Lys-Gly) (interchain with G-Cter in ubiquitin). Ser153 is subject to Phosphoserine. The segment covering 159-182 (EAEAQEEEEAGVDGDGDADVDGED) has biased composition (acidic residues). Lys220 is covalently cross-linked (Glycyl lysine isopeptide (Lys-Gly) (interchain with G-Cter in ubiquitin)). 265–271 (PGCGKTT) is an ATP binding site. Glycyl lysine isopeptide (Lys-Gly) (interchain with G-Cter in ubiquitin) cross-links involve residues Lys296, Lys305, Lys311, Lys317, and Lys330. A Glycyl lysine isopeptide (Lys-Gly) (interchain with G-Cter in SUMO2); alternate cross-link involves residue Lys477. Lys477 is covalently cross-linked (Glycyl lysine isopeptide (Lys-Gly) (interchain with G-Cter in ubiquitin); alternate). 2 positions are modified to phosphotyrosine: Tyr529 and Tyr557. Residue Lys622 forms a Glycyl lysine isopeptide (Lys-Gly) (interchain with G-Cter in ubiquitin) linkage. Lys628 is covalently cross-linked (Glycyl lysine isopeptide (Lys-Gly) (interchain with G-Cter in ubiquitin); alternate). Residue Lys628 is modified to N6-acetyllysine; alternate. Lys631 participates in a covalent cross-link: Glycyl lysine isopeptide (Lys-Gly) (interchain with G-Cter in ubiquitin).

This sequence belongs to the AAA ATPase family. RarA/MGS1/WRNIP1 subfamily. As to quaternary structure, forms homooligomers, possibly octamers. Directly interacts with POLD1, POLD2 and POLD4. Interacts with the N-terminal domain of WRN. Interacts (via UBZ4-type zinc finger) with monoubiquitin and polyubiquitin. Interacts with TRIM14 and PPP6C; these interactions positively regulate the RIGI signaling pathway. Post-translationally, sumoylated with SUMO1 and SUMO2/3. Ubiquitously expressed.

The protein localises to the nucleus. It localises to the cytoplasm. The enzyme catalyses ATP + H2O = ADP + phosphate + H(+). In terms of biological role, functions as a modulator of initiation or reinitiation events during DNA polymerase delta-mediated DNA synthesis. In the presence of ATP, stimulation of DNA polymerase delta-mediated DNA synthesis is decreased. Also plays a role in the innate immune defense against viruses. Stabilizes the RIGI dsRNA interaction and promotes RIGI 'Lys-63'-linked polyubiquitination. In turn, RIGI transmits the signal through mitochondrial MAVS. This is ATPase WRNIP1 from Mus musculus (Mouse).